The sequence spans 663 residues: Protein MNE1 (663 aa).

The polypeptide is Protein MNE1 (MNE1) (Saccharomyces cerevisiae (strain ATCC 204508 / S288c) (Baker's yeast)).